The primary structure comprises 91 residues: DNA-directed RNA polymerase subunit omega (91 aa).

It belongs to the RNA polymerase subunit omega family. In terms of assembly, the RNAP catalytic core consists of 2 alpha, 1 beta, 1 beta' and 1 omega subunit. When a sigma factor is associated with the core the holoenzyme is formed, which can initiate transcription.

It catalyses the reaction RNA(n) + a ribonucleoside 5'-triphosphate = RNA(n+1) + diphosphate. Functionally, promotes RNA polymerase assembly. Latches the N- and C-terminal regions of the beta' subunit thereby facilitating its interaction with the beta and alpha subunits. The protein is DNA-directed RNA polymerase subunit omega of Serratia proteamaculans (strain 568).